Consider the following 103-residue polypeptide: MQNQRIRIRLKAFDHRLIDQSTAEIVETAKRTGAQVRGPIPLPTRKERFTVLISPHVNKDARDQYEIRTHKRLVDIVEPTEKTVDALMRLDLAAGVDVQISLG.

It belongs to the universal ribosomal protein uS10 family. In terms of assembly, part of the 30S ribosomal subunit.

Functionally, involved in the binding of tRNA to the ribosomes. The protein is Small ribosomal subunit protein uS10 of Actinobacillus pleuropneumoniae serotype 5b (strain L20).